The primary structure comprises 351 residues: Anthranilate phosphoribosyltransferase (351 aa).

5-phospho-alpha-D-ribose 1-diphosphate-binding positions include Gly80, 83 to 84, Thr88, 90 to 93, 108 to 116, and Ser120; these read GD, NIST, and KHGNRSVTS. Residue Gly80 participates in anthranilate binding. Ser92 lines the Mg(2+) pocket. Asn111 contacts anthranilate. Arg166 is a binding site for anthranilate. 2 residues coordinate Mg(2+): Asp229 and Glu230.

It belongs to the anthranilate phosphoribosyltransferase family. As to quaternary structure, homodimer. Mg(2+) is required as a cofactor.

It carries out the reaction N-(5-phospho-beta-D-ribosyl)anthranilate + diphosphate = 5-phospho-alpha-D-ribose 1-diphosphate + anthranilate. Its pathway is amino-acid biosynthesis; L-tryptophan biosynthesis; L-tryptophan from chorismate: step 2/5. Functionally, catalyzes the transfer of the phosphoribosyl group of 5-phosphorylribose-1-pyrophosphate (PRPP) to anthranilate to yield N-(5'-phosphoribosyl)-anthranilate (PRA). In Chlorobium limicola (strain DSM 245 / NBRC 103803 / 6330), this protein is Anthranilate phosphoribosyltransferase.